Here is a 236-residue protein sequence, read N- to C-terminus: tRNA (guanine-N(7)-)-methyltransferase (236 aa).

Residues glutamate 68, glutamate 93, aspartate 120, and aspartate 143 each coordinate S-adenosyl-L-methionine. Residue aspartate 143 is part of the active site. Substrate-binding positions include lysine 147, aspartate 179, and 212–215; that span reads TKFE.

Belongs to the class I-like SAM-binding methyltransferase superfamily. TrmB family.

It catalyses the reaction guanosine(46) in tRNA + S-adenosyl-L-methionine = N(7)-methylguanosine(46) in tRNA + S-adenosyl-L-homocysteine. Its pathway is tRNA modification; N(7)-methylguanine-tRNA biosynthesis. In terms of biological role, catalyzes the formation of N(7)-methylguanine at position 46 (m7G46) in tRNA. This Nitrosococcus oceani (strain ATCC 19707 / BCRC 17464 / JCM 30415 / NCIMB 11848 / C-107) protein is tRNA (guanine-N(7)-)-methyltransferase.